The chain runs to 428 residues: GTPase Obg (428 aa).

Positions 1 to 158 constitute an Obg domain; sequence MFVDQVQVEV…RFIKLELKVL (158 aa). Positions 159–333 constitute an OBG-type G domain; that stretch reads ADVGLVGFPS…LMHKTAEVLK (175 aa). GTP contacts are provided by residues 165-172, 190-194, 212-215, 282-285, and 314-316; these read GFPSVGKS, FTTLV, DLPG, TKMD, and SSL. Ser-172 and Thr-192 together coordinate Mg(2+). Residues 350–428 enclose the OCT domain; it reads YKYQPEPALK…IDDFTFEFVE (79 aa).

Belongs to the TRAFAC class OBG-HflX-like GTPase superfamily. OBG GTPase family. Monomer. It depends on Mg(2+) as a cofactor.

It localises to the cytoplasm. Its function is as follows. An essential GTPase which binds GTP, GDP and possibly (p)ppGpp with moderate affinity, with high nucleotide exchange rates and a fairly low GTP hydrolysis rate. Plays a role in control of the cell cycle, stress response, ribosome biogenesis and in those bacteria that undergo differentiation, in morphogenesis control. The sequence is that of GTPase Obg from Lacticaseibacillus paracasei (strain ATCC 334 / BCRC 17002 / CCUG 31169 / CIP 107868 / KCTC 3260 / NRRL B-441) (Lactobacillus paracasei).